Here is a 107-residue protein sequence, read N- to C-terminus: Urease subunit beta (107 aa).

Belongs to the urease beta subunit family. Heterotrimer of UreA (gamma), UreB (beta) and UreC (alpha) subunits. Three heterotrimers associate to form the active enzyme.

The protein resides in the cytoplasm. The enzyme catalyses urea + 2 H2O + H(+) = hydrogencarbonate + 2 NH4(+). The protein operates within nitrogen metabolism; urea degradation; CO(2) and NH(3) from urea (urease route): step 1/1. The chain is Urease subunit beta from Escherichia coli.